We begin with the raw amino-acid sequence, 1778 residues long: Protein TIC 214 (1778 aa).

A run of 6 helical transmembrane segments spans residues 18-38 (IINS…FSIG), 67-87 (FIAG…HLAL), 90-110 (PHTI…WNNN), 132-152 (VFLN…SSML), 175-195 (VGWL…LVWI), and 226-246 (IFSI…PSPI). Positions 1498–1520 (GQGELESDNEKKRNPESALSNQE) are disordered.

This sequence belongs to the TIC214 family. In terms of assembly, part of the Tic complex.

It localises to the plastid. It is found in the chloroplast inner membrane. Functionally, involved in protein precursor import into chloroplasts. May be part of an intermediate translocation complex acting as a protein-conducting channel at the inner envelope. This chain is Protein TIC 214, found in Arabis hirsuta (Hairy rock-cress).